We begin with the raw amino-acid sequence, 329 residues long: uncharacterized protein (329 aa).

The tract at residues 284–303 (SGGGHSEAGGLNAPYDKSKS) is disordered.

This is an uncharacterized protein from Methanocaldococcus jannaschii (strain ATCC 43067 / DSM 2661 / JAL-1 / JCM 10045 / NBRC 100440) (Methanococcus jannaschii).